A 136-amino-acid polypeptide reads, in one-letter code: Ribosome-binding factor A (136 aa).

It belongs to the RbfA family. Monomer. Binds 30S ribosomal subunits, but not 50S ribosomal subunits or 70S ribosomes.

The protein localises to the cytoplasm. One of several proteins that assist in the late maturation steps of the functional core of the 30S ribosomal subunit. Associates with free 30S ribosomal subunits (but not with 30S subunits that are part of 70S ribosomes or polysomes). Required for efficient processing of 16S rRNA. May interact with the 5'-terminal helix region of 16S rRNA. The protein is Ribosome-binding factor A of Yersinia enterocolitica serotype O:8 / biotype 1B (strain NCTC 13174 / 8081).